A 148-amino-acid polypeptide reads, in one-letter code: Large ribosomal subunit protein bL9 (148 aa).

The protein belongs to the bacterial ribosomal protein bL9 family.

In terms of biological role, binds to the 23S rRNA. The chain is Large ribosomal subunit protein bL9 from Bacillus cereus (strain G9842).